The chain runs to 466 residues: Communesin N16 acyltransferase cnsK (466 aa).

It belongs to the fumigaclavine B O-acetyltransferase family.

The protein operates within alkaloid biosynthesis. Its function is as follows. Communesin N16 acyltransferase; part of the gene cluster that mediates the biosynthesis of communesins, a prominent class of indole alkaloids with great potential as pharmaceuticals. Communesins are biosynthesized by the coupling of tryptamine and aurantioclavine, two building blocks derived from L-tryptophan. The L-tryptophan decarboxylase cnsB converts L-tryptophan to tryptamine, whereas the tryptophan dimethylallyltransferase cnsF converts L-tryptophan to 4-dimethylallyl tryptophan which is further transformed to aurantioclavine by the aurantioclavine synthase cnsA, probably aided by the catalase cnsD. The cytochrome P450 monooxygenase cnsC catalyzes the heterodimeric coupling between the two different indole moieties, tryptamine and aurantioclavine, to construct vicinal quaternary stereocenters and yield the heptacyclic communesin scaffold. The O-methyltransferase cnsE then methylates the communesin scaffold to produce communesin K, the simplest characterized communesin that contains the heptacyclic core. The dioxygenase cnsJ converts communesin K into communesin I. Acylation to introduce the hexadienyl group at position N16 of communesin I by the acyltransferase cnsK leads to the production of communesin B. The hexadienyl group is produced by the highly reducing polyketide synthase cnsI, before being hydrolytically removed from cnsI by the serine hydrolase cnsH, converted into hexadienyl-CoA by the CoA ligase cnsG, and then transferred to communesin I by cnsK. Surprisingly, cnsK may also be a promiscuous acyltransferase that can tolerate a range of acyl groups, including acetyl-, propionyl-, and butyryl-CoA, which lead to communesins A, G and H respectively. The roles of the alpha-ketoglutarate-dependent dioxygenases cnsM and cnsP have still to be determined. This is Communesin N16 acyltransferase cnsK from Penicillium expansum (Blue mold rot fungus).